Here is a 442-residue protein sequence, read N- to C-terminus: ATP-dependent protease ATPase subunit HslU (442 aa).

Residues Ile18, 60–65 (GVGKTE), Asp255, Glu320, and Arg392 each bind ATP.

It belongs to the ClpX chaperone family. HslU subfamily. A double ring-shaped homohexamer of HslV is capped on each side by a ring-shaped HslU homohexamer. The assembly of the HslU/HslV complex is dependent on binding of ATP.

Its subcellular location is the cytoplasm. In terms of biological role, ATPase subunit of a proteasome-like degradation complex; this subunit has chaperone activity. The binding of ATP and its subsequent hydrolysis by HslU are essential for unfolding of protein substrates subsequently hydrolyzed by HslV. HslU recognizes the N-terminal part of its protein substrates and unfolds these before they are guided to HslV for hydrolysis. The chain is ATP-dependent protease ATPase subunit HslU from Hahella chejuensis (strain KCTC 2396).